A 674-amino-acid polypeptide reads, in one-letter code: Methionine--tRNA ligase (674 aa).

Residues Pro-11–His-21 carry the 'HIGH' region motif. 4 residues coordinate Zn(2+): Cys-142, Cys-145, Cys-155, and Cys-158. The short motif at Lys-330–Ser-334 is the 'KMSKS' region element. Lys-333 serves as a coordination point for ATP. The tRNA-binding domain maps to Asp-574–Lys-674.

The protein belongs to the class-I aminoacyl-tRNA synthetase family. MetG type 1 subfamily. In terms of assembly, homodimer. Requires Zn(2+) as cofactor.

It is found in the cytoplasm. It catalyses the reaction tRNA(Met) + L-methionine + ATP = L-methionyl-tRNA(Met) + AMP + diphosphate. Its function is as follows. Is required not only for elongation of protein synthesis but also for the initiation of all mRNA translation through initiator tRNA(fMet) aminoacylation. The sequence is that of Methionine--tRNA ligase from Francisella tularensis subsp. tularensis (strain WY96-3418).